The sequence spans 865 residues: Xylosyltransferase 2 (865 aa).

Residues 1 to 15 (MVASARVQKLVRRYK) lie on the Cytoplasmic side of the membrane. A helical; Signal-anchor for type II membrane protein transmembrane segment spans residues 16 to 36 (LAIATALAILLLQGLVVWSFS). Residues 37–865 (GLEEDEAGEK…GPVKADGRLR (829 aa)) lie on the Lumenal side of the membrane. Residues 41 to 157 (DEAGEKGRQR…EGAPQPTDNG (117 aa)) form a disordered region. A compositionally biased stretch (basic and acidic residues) spans 53-65 (RPLDPGEGSKDTD). Basic residues predominate over residues 73-82 (STGRRHGRWR). Residue Asn122 is glycosylated (N-linked (GlcNAc...) asparagine). The segment covering 125 to 137 (GAAAGEALVGAAG) has biased composition (low complexity). Intrachain disulfides connect Cys162–Cys190, Cys206–Cys448, Cys467–Cys480, and Cys469–Cys478. UDP-alpha-D-xylose-binding positions include Val239, Asp267, and 296-298 (TIW). N-linked (GlcNAc...) asparagine glycosylation is present at Asn327. 400 to 401 (DW) contacts UDP-alpha-D-xylose. UDP-alpha-D-xylose is bound by residues Ser481 and 504 to 505 (RK). Cystine bridges form between Cys581-Cys833 and Cys826-Cys839. N-linked (GlcNAc...) asparagine glycosylation is present at Asn683. Residues 846-865 (SLSPDPKSELGPVKADGRLR) form a disordered region.

Belongs to the glycosyltransferase 14 family. XylT subfamily. Monomer. Requires Mg(2+) as cofactor. The cofactor is Mn(2+). Post-translationally, contains disulfide bonds. In terms of tissue distribution, widely expressed. Expressed at higher level in kidney and pancreas.

It is found in the golgi apparatus membrane. The protein localises to the secreted. The enzyme catalyses UDP-alpha-D-xylose + L-seryl-[protein] = 3-O-(beta-D-xylosyl)-L-seryl-[protein] + UDP + H(+). The protein operates within glycan metabolism; chondroitin sulfate biosynthesis. It participates in glycan metabolism; heparan sulfate biosynthesis. Catalyzes the first step in the biosynthesis of chondroitin sulfate, heparan sulfate and dermatan sulfate proteoglycans, such as DCN. Transfers D-xylose from UDP-D-xylose to specific serine residues of the core protein. This chain is Xylosyltransferase 2 (XYLT2), found in Homo sapiens (Human).